The chain runs to 398 residues: Ornithine aminotransferase (398 aa).

An N6-(pyridoxal phosphate)lysine modification is found at lysine 256.

It belongs to the class-III pyridoxal-phosphate-dependent aminotransferase family. OAT subfamily. Pyridoxal 5'-phosphate is required as a cofactor.

It is found in the cytoplasm. It catalyses the reaction a 2-oxocarboxylate + L-ornithine = L-glutamate 5-semialdehyde + an L-alpha-amino acid. The protein operates within amino-acid biosynthesis; L-proline biosynthesis; L-glutamate 5-semialdehyde from L-ornithine: step 1/1. Its function is as follows. Catalyzes the interconversion of ornithine to glutamate semialdehyde. This is Ornithine aminotransferase from Halalkalibacterium halodurans (strain ATCC BAA-125 / DSM 18197 / FERM 7344 / JCM 9153 / C-125) (Bacillus halodurans).